Reading from the N-terminus, the 42-residue chain is Photosystem I reaction center subunit IX (42 aa).

Residues 7 to 27 (YLSAAPVLSTLWLGALAGLLI) form a helical membrane-spanning segment.

This sequence belongs to the PsaJ family.

The protein resides in the plastid membrane. May help in the organization of the PsaE and PsaF subunits. The polypeptide is Photosystem I reaction center subunit IX (Cuscuta exaltata (Tall dodder)).